Here is a 429-residue protein sequence, read N- to C-terminus: 4-hydroxy-3-methylbut-2-en-1-yl diphosphate synthase (flavodoxin) (429 aa).

Residues cysteine 317, cysteine 320, cysteine 363, and glutamate 370 each contribute to the [4Fe-4S] cluster site.

It belongs to the IspG family. The cofactor is [4Fe-4S] cluster.

It catalyses the reaction (2E)-4-hydroxy-3-methylbut-2-enyl diphosphate + oxidized [flavodoxin] + H2O + 2 H(+) = 2-C-methyl-D-erythritol 2,4-cyclic diphosphate + reduced [flavodoxin]. It functions in the pathway isoprenoid biosynthesis; isopentenyl diphosphate biosynthesis via DXP pathway; isopentenyl diphosphate from 1-deoxy-D-xylulose 5-phosphate: step 5/6. In terms of biological role, converts 2C-methyl-D-erythritol 2,4-cyclodiphosphate (ME-2,4cPP) into 1-hydroxy-2-methyl-2-(E)-butenyl 4-diphosphate. The sequence is that of 4-hydroxy-3-methylbut-2-en-1-yl diphosphate synthase (flavodoxin) from Deinococcus radiodurans (strain ATCC 13939 / DSM 20539 / JCM 16871 / CCUG 27074 / LMG 4051 / NBRC 15346 / NCIMB 9279 / VKM B-1422 / R1).